The chain runs to 396 residues: 1-deoxy-D-xylulose 5-phosphate reductoisomerase (396 aa).

NADPH contacts are provided by T14, G15, S16, I17, G40, and N128. Position 129 (K129) interacts with 1-deoxy-D-xylulose 5-phosphate. E130 lines the NADPH pocket. D154 is a Mn(2+) binding site. Positions 155, 156, 180, and 203 each coordinate 1-deoxy-D-xylulose 5-phosphate. Residue E156 coordinates Mn(2+). Residue G209 coordinates NADPH. S216, N221, K222, and E225 together coordinate 1-deoxy-D-xylulose 5-phosphate. Residue E225 participates in Mn(2+) binding.

This sequence belongs to the DXR family. It depends on Mg(2+) as a cofactor. The cofactor is Mn(2+).

It carries out the reaction 2-C-methyl-D-erythritol 4-phosphate + NADP(+) = 1-deoxy-D-xylulose 5-phosphate + NADPH + H(+). It participates in isoprenoid biosynthesis; isopentenyl diphosphate biosynthesis via DXP pathway; isopentenyl diphosphate from 1-deoxy-D-xylulose 5-phosphate: step 1/6. Functionally, catalyzes the NADPH-dependent rearrangement and reduction of 1-deoxy-D-xylulose-5-phosphate (DXP) to 2-C-methyl-D-erythritol 4-phosphate (MEP). This is 1-deoxy-D-xylulose 5-phosphate reductoisomerase from Xylella fastidiosa (strain 9a5c).